Consider the following 580-residue polypeptide: Peptide transporter PTR_B (580 aa).

The segment covering 1 to 30 (MSTEKLQNDDKVVDEKYVDADEHSLVRSQD) has biased composition (basic and acidic residues). Positions 1–45 (MSTEKLQNDDKVVDEKYVDADEHSLVRSQDESFPQTEEGGEPTDH) are disordered. The chain crosses the membrane as a helical span at residues 57-78 (IPMSCWLVAIVELSERFTYYGL). A glycan (N-linked (GlcNAc...) asparagine) is linked at asparagine 101. The next 11 membrane-spanning stretches (helical) occupy residues 107-127 (ALSYFWQFWCYVTPIFGAWIA), 134-154 (YFTICIFCIVMMVGIFILFIT), 163-183 (TTSLAGFIVAVIVIGIGTGGI), 219-239 (VSNVFMFFYLMINIGALSVIA), 249-269 (FWAAFLLPLCFFCVGILALVL), 326-346 (ALYACKVFAFYPIYWLVYGQM), 370-390 (INSITLIIFIPICERIVYPFI), 402-422 (IFWGFMFGAAAMVYAGVLQHF), 449-469 (IALQTPCYWLIGMSEIFASIT), 484-504 (SFIMSIFLLMNAFGSALGIAL), and 513-533 (MVWTFNGLGVSCFIAGWIFWF).

The protein belongs to the major facilitator superfamily. Proton-dependent oligopeptide transporter (POT/PTR) (TC 2.A.17) family.

The protein localises to the cell membrane. The catalysed reaction is a dipeptide(out) + H(+)(out) = a dipeptide(in) + H(+)(in). It carries out the reaction an L-amino acid tripeptide(out) + H(+)(out) = an L-amino acid tripeptide(in) + H(+)(in). Its function is as follows. Peptide transporter that exploits the inwardly directed proton motive force to facilitate the cellular uptake of di/tripeptides. Shows strong uptake specificity towards the dipeptides Tyr-Phe and Gly-His, when compared to PTR_A and PTR_C. This chain is Peptide transporter PTR_B, found in Candidozyma auris (Yeast).